The primary structure comprises 208 residues: Uracil phosphoribosyltransferase (208 aa).

Residues arginine 78, arginine 103, and aspartate 130–serine 138 contribute to the 5-phospho-alpha-D-ribose 1-diphosphate site. Uracil is bound by residues isoleucine 193 and glycine 198 to alanine 200. Aspartate 199 provides a ligand contact to 5-phospho-alpha-D-ribose 1-diphosphate.

It belongs to the UPRTase family. Mg(2+) serves as cofactor.

It carries out the reaction UMP + diphosphate = 5-phospho-alpha-D-ribose 1-diphosphate + uracil. The protein operates within pyrimidine metabolism; UMP biosynthesis via salvage pathway; UMP from uracil: step 1/1. Its activity is regulated as follows. Allosterically activated by GTP. Catalyzes the conversion of uracil and 5-phospho-alpha-D-ribose 1-diphosphate (PRPP) to UMP and diphosphate. The chain is Uracil phosphoribosyltransferase from Shewanella woodyi (strain ATCC 51908 / MS32).